Consider the following 298-residue polypeptide: Protease HtpX (298 aa).

2 consecutive transmembrane segments (helical) span residues 4 to 24 (IALY…TLSL) and 41 to 61 (TSLL…SLLI). Histidine 147 is a Zn(2+) binding site. Residue glutamate 148 is part of the active site. Residue histidine 151 coordinates Zn(2+). Transmembrane regions (helical) follow at residues 162–182 (LIQG…GYVI) and 193–213 (GLGF…GIAA). Residue glutamate 225 participates in Zn(2+) binding.

This sequence belongs to the peptidase M48B family. Zn(2+) is required as a cofactor.

Its subcellular location is the cell inner membrane. This Alcanivorax borkumensis (strain ATCC 700651 / DSM 11573 / NCIMB 13689 / SK2) protein is Protease HtpX.